The following is a 556-amino-acid chain: Arginine--tRNA ligase (556 aa).

The 'HIGH' region motif lies at 132 to 142; that stretch reads ANPTGPIHLGG.

Belongs to the class-I aminoacyl-tRNA synthetase family. As to quaternary structure, monomer.

It localises to the cytoplasm. The enzyme catalyses tRNA(Arg) + L-arginine + ATP = L-arginyl-tRNA(Arg) + AMP + diphosphate. This is Arginine--tRNA ligase from Kocuria rhizophila (strain ATCC 9341 / DSM 348 / NBRC 103217 / DC2201).